A 282-amino-acid polypeptide reads, in one-letter code: MPAKVLDGKKIAADYRANLAQEVEQLKAQGVTPNLTVILVGNDGASQSYVNNKKKSAEKIGMSSSIIHLDESTTEAALLEEIDKLNNDDNVHGILVQVPLPKQIDETKVLEKIAPEKDVDGFNPINIGRLYAGVETYIPCTPLGIMEILKHADIDLEGKDVAVIGRSHIVGQPVAKLLTDANATVTLLHSRSKDMDAVLKRSDVIVSAVGKPGLVTKDVVKQGAVIVDVGNTVVDGKLTGDVVYDEVSEVAGAITPVPGGVGPLTITMVLNNTLLAAKRAQQ.

NADP(+) is bound by residues 165 to 167 (GRS) and Ser190.

It belongs to the tetrahydrofolate dehydrogenase/cyclohydrolase family. Homodimer.

The enzyme catalyses (6R)-5,10-methylene-5,6,7,8-tetrahydrofolate + NADP(+) = (6R)-5,10-methenyltetrahydrofolate + NADPH. It carries out the reaction (6R)-5,10-methenyltetrahydrofolate + H2O = (6R)-10-formyltetrahydrofolate + H(+). It functions in the pathway one-carbon metabolism; tetrahydrofolate interconversion. Catalyzes the oxidation of 5,10-methylenetetrahydrofolate to 5,10-methenyltetrahydrofolate and then the hydrolysis of 5,10-methenyltetrahydrofolate to 10-formyltetrahydrofolate. This Macrococcus caseolyticus (strain JCSC5402) (Macrococcoides caseolyticum) protein is Bifunctional protein FolD.